Here is a 208-residue protein sequence, read N- to C-terminus: Riboflavin synthase (208 aa).

2 Lumazine-binding repeats span residues 1–97 (MFTG…MGGH) and 98–195 (FVQG…EKLV). 2,4-dihydroxypteridine-binding positions include 4–6 (GLV), 48–50 (CLT), 62–67 (GIAPES), 101–103 (GHV), Lys137, 146–148 (SLT), and 160–165 (MMISYT).

Homotrimer.

It catalyses the reaction 2 6,7-dimethyl-8-(1-D-ribityl)lumazine + H(+) = 5-amino-6-(D-ribitylamino)uracil + riboflavin. It participates in cofactor biosynthesis; riboflavin biosynthesis; riboflavin from 2-hydroxy-3-oxobutyl phosphate and 5-amino-6-(D-ribitylamino)uracil: step 2/2. Its function is as follows. Catalyzes the dismutation of two molecules of 6,7-dimethyl-8-ribityllumazine, resulting in the formation of riboflavin and 5-amino-6-(D-ribitylamino)uracil. The protein is Riboflavin synthase (rib5) of Schizosaccharomyces pombe (strain 972 / ATCC 24843) (Fission yeast).